The chain runs to 155 residues: Interleukin-2 (155 aa).

An N-terminal signal peptide occupies residues 1–20 (MYKIQLLSCIALTLALVANG). An O-linked (GalNAc...) threonine glycan is attached at threonine 23. Cysteines 79 and 127 form a disulfide.

This sequence belongs to the IL-2 family.

The protein resides in the secreted. Cytokine produced by activated CD4-positive helper T-cells and to a lesser extend activated CD8-positive T-cells and natural killer (NK) cells that plays pivotal roles in the immune response and tolerance. Binds to a receptor complex composed of either the high-affinity trimeric IL-2R (IL2RA/CD25, IL2RB/CD122 and IL2RG/CD132) or the low-affinity dimeric IL-2R (IL2RB and IL2RG). Interaction with the receptor leads to oligomerization and conformation changes in the IL-2R subunits resulting in downstream signaling starting with phosphorylation of JAK1 and JAK3. In turn, JAK1 and JAK3 phosphorylate the receptor to form a docking site leading to the phosphorylation of several substrates including STAT5. This process leads to activation of several pathways including STAT, phosphoinositide-3-kinase/PI3K and mitogen-activated protein kinase/MAPK pathways. Functions as a T-cell growth factor and can increase NK-cell cytolytic activity as well. Promotes strong proliferation of activated B-cells and subsequently immunoglobulin production. Plays a pivotal role in regulating the adaptive immune system by controlling the survival and proliferation of regulatory T-cells, which are required for the maintenance of immune tolerance. Moreover, participates in the differentiation and homeostasis of effector T-cell subsets, including Th1, Th2, Th17 as well as memory CD8-positive T-cells. The protein is Interleukin-2 (IL2) of Ovis aries (Sheep).